Here is a 423-residue protein sequence, read N- to C-terminus: Growth hormone-releasing hormone receptor (423 aa).

The N-terminal stretch at 1–22 (MDGLMWATRILCLLSLCGVTLG) is a signal peptide. The Extracellular segment spans residues 23-130 (HLHLECDFIT…KEKSYFSTVK (108 aa)). 3 disulfide bridges follow: C41–C64, C55–C96, and C78–C112. N-linked (GlcNAc...) asparagine glycosylation is found at N49 and N50. A helical membrane pass occupies residues 131-151 (IIYTTGHSISIVALCVAIAIL). Topologically, residues 152 to 167 (VALRRLHCPRNYIHTQ) are cytoplasmic. Residues 168-188 (LFATFILKASAVFLKDAAIFQ) form a helical membrane-spanning segment. The Extracellular portion of the chain corresponds to 189 to 210 (GDSTDHCSMSTVLCKVSVAISH). A helical membrane pass occupies residues 211–231 (LATMTNFSWLLAEAVYLSCLL). Topologically, residues 232-240 (ASTSPRSKP) are cytoplasmic. A helical transmembrane segment spans residues 241–261 (AFWWLVLAGWGLPVLCTGTWV). Residues 262–283 (GCKLAFEDTECWDLDNSSPCWW) lie on the Extracellular side of the membrane. The chain crosses the membrane as a helical span at residues 284 to 304 (IIKGPIVLSVGVNFGLFLNII). Topologically, residues 305-331 (CILLRKLEPAQGGLHTRAQYWRLSKST) are cytoplasmic. Residues 332 to 352 (LLLIPLFGIHYIIFNFLPDSA) traverse the membrane as a helical segment. Topologically, residues 353 to 357 (GLDIR) are extracellular. The helical transmembrane segment at 358 to 378 (VPLELGLGSFQGFIVAVLYCF) threads the bilayer. Residues 379–423 (LNQEVRTEISRKWYGHDPELLPARRTCTEWTTPPRSRLKVLTSEC) lie on the Cytoplasmic side of the membrane.

This sequence belongs to the G-protein coupled receptor 2 family. In terms of tissue distribution, pituitary gland.

The protein localises to the cell membrane. In terms of biological role, receptor for GRF, coupled to G proteins which activate adenylyl cyclase. Stimulates somatotroph cell growth, growth hormone gene transcription and growth hormone secretion. The polypeptide is Growth hormone-releasing hormone receptor (Ghrhr) (Mus musculus (Mouse)).